The following is a 452-amino-acid chain: Probable multidrug resistance protein NorM (452 aa).

The next 12 helical transmembrane spans lie at 14–34, 56–76, 97–117, 129–149, 164–184, 195–215, 244–264, 284–304, 319–339, 360–380, 392–412, and 417–437; these read LLHI…ITFL, LWTP…PIVA, VAAL…DLIL, IAKH…VYTV, MMIT…FIFG, GAGL…FFII, IGLP…AVTL, ASLL…VVGF, LIGI…ILLF, FLIY…IQGA, AAAF…VGTF, and AFGY…GLFF.

This sequence belongs to the multi antimicrobial extrusion (MATE) (TC 2.A.66.1) family.

Its subcellular location is the cell membrane. Functionally, multidrug efflux pump. The polypeptide is Probable multidrug resistance protein NorM (norM) (Bacillus subtilis (strain 168)).